The sequence spans 354 residues: GDSL esterase/lipase At5g03820 (354 aa).

A signal peptide spans 1–24; it reads MKMFIIMLMTFSVIACFYAGVGTG. Serine 37 acts as the Nucleophile in catalysis. Asparagine 66, asparagine 100, asparagine 237, asparagine 256, asparagine 257, asparagine 261, and asparagine 321 each carry an N-linked (GlcNAc...) asparagine glycan. Residues aspartate 329 and histidine 332 contribute to the active site.

The protein belongs to the 'GDSL' lipolytic enzyme family.

The protein localises to the secreted. The polypeptide is GDSL esterase/lipase At5g03820 (Arabidopsis thaliana (Mouse-ear cress)).